The primary structure comprises 435 residues: AP-2 complex subunit mu (435 aa).

Phosphoserine is present on Ser-45. Thr-156 is modified (phosphothreonine). The MHD domain occupies 170–434 (RNELFLDVLE…IGRSGIYETR (265 aa)). A 1,2-diacyl-sn-glycero-3-phospho-(1D-myo-inositol-3,4,5-trisphosphate)-binding residues include Lys-341, Lys-345, and Lys-354.

This sequence belongs to the adaptor complexes medium subunit family. As to quaternary structure, adaptor protein complex 2 (AP-2) is a heterotetramer composed of two large adaptins (alpha-type subunit AP2A1 or AP2A2 and beta-type subunit AP2B1), a medium adaptin (mu-type subunit AP2M1) and a small adaptin (sigma-type subunit AP2S1). Interacts with ATP6V1H and MEGF10. Interacts with EGFR. Interacts with PIP5K1C; tyrosine phosphorylation of PIP5K1C weakens the interaction. Interacts with KIAA0319; required for clathrin-mediated endocytosis of KIAA0319. Interacts with DVL2 (via DEP domain). Interacts with KCNQ1; mediates estrogen-induced internalization via clathrin-coated vesicles. Together with AP2A1 or AP2A2 and AP2B1, it interacts with ADAM10; this interaction facilitates ADAM10 endocytosis from the plasma membrane during long-term potentiation in hippocampal neurons. Probably interacts with ACE2 (via endocytic sorting signal motif); the interaction is inhibited by ACE2 phosphorylation. Interacts with RALBP1; the interaction is direct. Interacts with TMEM106B (via N-terminus). Phosphorylation at Thr-156 increases the affinity of the AP-2 complex for cargo membrane proteins during the initial stages of endocytosis.

It localises to the cell membrane. The protein resides in the membrane. The protein localises to the coated pit. Its function is as follows. Component of the adaptor protein complex 2 (AP-2). Adaptor protein complexes function in protein transport via transport vesicles in different membrane traffic pathways. Adaptor protein complexes are vesicle coat components and appear to be involved in cargo selection and vesicle formation. AP-2 is involved in clathrin-dependent endocytosis in which cargo proteins are incorporated into vesicles surrounded by clathrin (clathrin-coated vesicles, CCVs) which are destined for fusion with the early endosome. The clathrin lattice serves as a mechanical scaffold but is itself unable to bind directly to membrane components. Clathrin-associated adaptor protein (AP) complexes which can bind directly to both the clathrin lattice and to the lipid and protein components of membranes are considered to be the major clathrin adaptors contributing the CCV formation. AP-2 also serves as a cargo receptor to selectively sort the membrane proteins involved in receptor-mediated endocytosis. AP-2 seems to play a role in the recycling of synaptic vesicle membranes from the presynaptic surface. AP-2 recognizes Y-X-X-[FILMV] (Y-X-X-Phi) and [ED]-X-X-X-L-[LI] endocytosis signal motifs within the cytosolic tails of transmembrane cargo molecules. AP-2 may also play a role in maintaining normal post-endocytic trafficking through the ARF6-regulated, non-clathrin pathway. During long-term potentiation in hippocampal neurons, AP-2 is responsible for the endocytosis of ADAM10. The AP-2 mu subunit binds to transmembrane cargo proteins; it recognizes the Y-X-X-Phi motifs. The surface region interacting with to the Y-X-X-Phi motif is inaccessible in cytosolic AP-2, but becomes accessible through a conformational change following phosphorylation of AP-2 mu subunit at Thr-156 in membrane-associated AP-2. The membrane-specific phosphorylation event appears to involve assembled clathrin which activates the AP-2 mu kinase AAK1. Plays a role in endocytosis of frizzled family members upon Wnt signaling. This Pongo abelii (Sumatran orangutan) protein is AP-2 complex subunit mu (AP2M1).